An 82-amino-acid polypeptide reads, in one-letter code: Exodeoxyribonuclease 7 small subunit (82 aa).

This sequence belongs to the XseB family. As to quaternary structure, heterooligomer composed of large and small subunits.

The protein localises to the cytoplasm. It catalyses the reaction Exonucleolytic cleavage in either 5'- to 3'- or 3'- to 5'-direction to yield nucleoside 5'-phosphates.. Bidirectionally degrades single-stranded DNA into large acid-insoluble oligonucleotides, which are then degraded further into small acid-soluble oligonucleotides. This is Exodeoxyribonuclease 7 small subunit from Mycobacterium marinum (strain ATCC BAA-535 / M).